Here is a 142-residue protein sequence, read N- to C-terminus: Protein archease (142 aa).

Aspartate 12, aspartate 141, and leucine 142 together coordinate Ca(2+).

Belongs to the archease family.

Activates the tRNA-splicing ligase complex by facilitating the enzymatic turnover of catalytic subunit RtcB. Acts by promoting the guanylylation of RtcB, a key intermediate step in tRNA ligation. Can also alter the NTP specificity of RtcB such that ATP, dGTP or ITP is used efficiently. This Thermococcus gammatolerans (strain DSM 15229 / JCM 11827 / EJ3) protein is Protein archease.